Reading from the N-terminus, the 249-residue chain is Cytochrome c oxidase subunit 2 (249 aa).

The N-terminal stretch at 1–13 (MLNLFQIMNMINN) is a signal peptide. The Mitochondrial intermembrane portion of the chain corresponds to 14–40 (DVPTPYGFYFQDSATPNQEGILELHDN). The chain crosses the membrane as a helical span at residues 41 to 62 (IMFYLVVILGLVSWMLFTIVRT). The Mitochondrial matrix segment spans residues 63–80 (YSRNPMAYKYIKHGQTIE). A helical transmembrane segment spans residues 81–105 (IIWKIFPAVILLTIAFPSFILLYLC). The Mitochondrial intermembrane segment spans residues 106–249 (DEVISPAMTI…PKFLEWLNEQ (144 aa)). Positions 184, 219, 221, 223, 227, and 230 each coordinate Cu cation. Glu221 provides a ligand contact to Mg(2+).

Belongs to the cytochrome c oxidase subunit 2 family. Component of the cytochrome c oxidase (complex IV, CIV), a multisubunit enzyme composed of a catalytic core of 3 subunits and several supernumerary subunits. The complex exists as a monomer or a dimer and forms supercomplexes (SCs) in the inner mitochondrial membrane with ubiquinol-cytochrome c oxidoreductase (cytochrome b-c1 complex, complex III, CIII). Requires Cu cation as cofactor. The signal sequence of COX2 is processed by IMP1.

The protein localises to the mitochondrion inner membrane. The enzyme catalyses 4 Fe(II)-[cytochrome c] + O2 + 8 H(+)(in) = 4 Fe(III)-[cytochrome c] + 2 H2O + 4 H(+)(out). Its function is as follows. Component of the cytochrome c oxidase, the last enzyme in the mitochondrial electron transport chain which drives oxidative phosphorylation. The respiratory chain contains 3 multisubunit complexes succinate dehydrogenase (complex II, CII), ubiquinol-cytochrome c oxidoreductase (cytochrome b-c1 complex, complex III, CIII) and cytochrome c oxidase (complex IV, CIV), that cooperate to transfer electrons derived from NADH and succinate to molecular oxygen, creating an electrochemical gradient over the inner membrane that drives transmembrane transport and the ATP synthase. Cytochrome c oxidase is the component of the respiratory chain that catalyzes the reduction of oxygen to water. Electrons originating from reduced cytochrome c in the intermembrane space (IMS) are transferred via the dinuclear copper A center (CU(A)) of subunit 2 and heme A of subunit 1 to the active site in subunit 1, a binuclear center (BNC) formed by heme A3 and copper B (CU(B)). The BNC reduces molecular oxygen to 2 water molecules using 4 electrons from cytochrome c in the IMS and 4 protons from the mitochondrial matrix. In Maudiozyma exigua (Yeast), this protein is Cytochrome c oxidase subunit 2 (COX2).